The primary structure comprises 477 residues: MSDTKRNTIGKFGLLSLTFAAVYSFNNVINNNIELGLASAPMFFLATIFYFIPFCLIIAEFVSLNKNSEAGVYAWVKSSLGGRWAFITAYTYWFVNLFFFTSLLPRVIAYASYAFLGYEYIMTPVATTIISMVLFAFSTWVSTNGAKMLGPITSVTSTLMLLLTLSYILLAGTALVGGVQPADAITVDAMIPNFNWAFLGVTTWIFMAAGGAESVAVYVNDVKGGSKSFVKVIILAGIFIGVLYSVSSVLINVFVSSKELKFTGGSVQVFHGMAAYFGLPEALMNRFVGLVSFTAMFGSLLMWTATPVKIFFSEIPEGIFGKKTVELNENGVPARAAWIQFLIVIPLMIIPMLGSNTVQDLMNTIINMTAAASMLPPLFIMLAYLNLRAKLDHLPRDFRMGSRRTGIIVVSMLIAIFAVGFVASTFPTGANILTIIFYNVGGIVIFLGFAWWKYSKYIKGLTAEERHIEATPASNVD.

Over M1–T8 the chain is Periplasmic. The helical transmembrane segment at I9–I29 threads the bilayer. Over N30–P41 the chain is Cytoplasmic. The chain crosses the membrane as a helical span at residues M42–V62. Over S63–R83 the chain is Periplasmic. The chain crosses the membrane as a helical span at residues W84–L104. Topologically, residues P105–Y120 are cytoplasmic. A helical transmembrane segment spans residues I121–V141. Over S142–T158 the chain is Periplasmic. The chain crosses the membrane as a helical span at residues L159–V179. The Cytoplasmic portion of the chain corresponds to Q180–W196. Residues A197–V217 form a helical membrane-spanning segment. Residues Y218–V232 are Periplasmic-facing. Residues I233–V253 form a helical membrane-spanning segment. Residues F254–T263 are Cytoplasmic-facing. A helical membrane pass occupies residues G264–M284. Topologically, residues N285–R286 are periplasmic. The chain crosses the membrane as a helical span at residues F287 to P307. The Cytoplasmic segment spans residues V308 to R335. The chain crosses the membrane as a helical span at residues A336 to N356. Residues T357–T364 lie on the Periplasmic side of the membrane. The chain crosses the membrane as a helical span at residues I365–L385. Residues N386 to T405 are Cytoplasmic-facing. Residues G406–F426 form a helical membrane-spanning segment. The Periplasmic portion of the chain corresponds to P427 to N431. The chain crosses the membrane as a helical span at residues I432–W452. Over K453–D477 the chain is Cytoplasmic.

This sequence belongs to the amino acid-polyamine-organocation (APC) superfamily.

The protein resides in the cell inner membrane. This is Inner membrane transporter YgjI (ygjI) from Escherichia coli (strain K12).